The primary structure comprises 86 residues: Acyl carrier protein (86 aa).

Positions 10 to 85 (DKIEQKVIEM…DVIKYIKERQ (76 aa)) constitute a Carrier domain. S45 is modified (O-(pantetheine 4'-phosphoryl)serine).

It belongs to the acyl carrier protein (ACP) family. 4'-phosphopantetheine is transferred from CoA to a specific serine of apo-ACP by AcpS. This modification is essential for activity because fatty acids are bound in thioester linkage to the sulfhydryl of the prosthetic group.

It localises to the cytoplasm. It functions in the pathway lipid metabolism; fatty acid biosynthesis. Carrier of the growing fatty acid chain in fatty acid biosynthesis. The polypeptide is Acyl carrier protein (Rickettsia africae (strain ESF-5)).